Consider the following 306-residue polypeptide: Lipoyl synthase (306 aa).

7 residues coordinate [4Fe-4S] cluster: Cys52, Cys57, Cys63, Cys78, Cys82, Cys85, and Ser289. In terms of domain architecture, Radical SAM core spans 64-278; that stretch reads WNRKTATYML…KETAYKIGFK (215 aa).

It belongs to the radical SAM superfamily. Lipoyl synthase family. The cofactor is [4Fe-4S] cluster.

Its subcellular location is the cytoplasm. It carries out the reaction [[Fe-S] cluster scaffold protein carrying a second [4Fe-4S](2+) cluster] + N(6)-octanoyl-L-lysyl-[protein] + 2 oxidized [2Fe-2S]-[ferredoxin] + 2 S-adenosyl-L-methionine + 4 H(+) = [[Fe-S] cluster scaffold protein] + N(6)-[(R)-dihydrolipoyl]-L-lysyl-[protein] + 4 Fe(3+) + 2 hydrogen sulfide + 2 5'-deoxyadenosine + 2 L-methionine + 2 reduced [2Fe-2S]-[ferredoxin]. It participates in protein modification; protein lipoylation via endogenous pathway; protein N(6)-(lipoyl)lysine from octanoyl-[acyl-carrier-protein]: step 2/2. Catalyzes the radical-mediated insertion of two sulfur atoms into the C-6 and C-8 positions of the octanoyl moiety bound to the lipoyl domains of lipoate-dependent enzymes, thereby converting the octanoylated domains into lipoylated derivatives. The sequence is that of Lipoyl synthase from Leptospira biflexa serovar Patoc (strain Patoc 1 / Ames).